Consider the following 210-residue polypeptide: Thymidylate kinase (210 aa).

13-20 (GLEGAGKS) contributes to the ATP binding site.

It belongs to the thymidylate kinase family.

The catalysed reaction is dTMP + ATP = dTDP + ADP. Functionally, phosphorylation of dTMP to form dTDP in both de novo and salvage pathways of dTTP synthesis. This chain is Thymidylate kinase, found in Shewanella loihica (strain ATCC BAA-1088 / PV-4).